We begin with the raw amino-acid sequence, 471 residues long: uncharacterized protein (471 aa).

Helical transmembrane passes span 15–35, 66–86, 89–109, 147–167, 179–199, 210–230, 237–257, 303–323, 353–373, 386–406, and 410–430; these read LWGP…TILL, PLQA…IVGV, AIMF…LFAM, WLGV…IMVQ, FSFN…LVVI, EFVV…IVLM, AFFS…GGFA, VIGI…IVLA, GYFV…VVIF, LAGH…AAGG, and IWGV…IALL.

The protein belongs to the alanine or glycine:cation symporter (AGCS) (TC 2.A.25) family.

The protein localises to the cell membrane. This is an uncharacterized protein from Bacillus subtilis (strain 168).